The chain runs to 344 residues: uncharacterized protein (344 aa).

Transmembrane regions (helical) follow at residues 53 to 73 (FVVGLLLSFILGNVLWGVSVW), 84 to 104 (WPILPTAFSLHFLFYGLGYNI), 153 to 173 (IYPLFHYFYIHIFQVLHLYLL), 189 to 209 (FGAWDWIALELFMFMFVLEML), and 275 to 295 (IASESLLNWTIFAWLGLVGVF).

Belongs to the steroid 5-alpha reductase family.

The protein localises to the endoplasmic reticulum membrane. This is an uncharacterized protein from Schizosaccharomyces pombe (strain 972 / ATCC 24843) (Fission yeast).